The following is a 346-amino-acid chain: Phosphoribosylformylglycinamidine cyclo-ligase (346 aa).

The protein belongs to the AIR synthase family.

The protein localises to the cytoplasm. The enzyme catalyses 2-formamido-N(1)-(5-O-phospho-beta-D-ribosyl)acetamidine + ATP = 5-amino-1-(5-phospho-beta-D-ribosyl)imidazole + ADP + phosphate + H(+). Its pathway is purine metabolism; IMP biosynthesis via de novo pathway; 5-amino-1-(5-phospho-D-ribosyl)imidazole from N(2)-formyl-N(1)-(5-phospho-D-ribosyl)glycinamide: step 2/2. The protein is Phosphoribosylformylglycinamidine cyclo-ligase of Bacillus pumilus (strain SAFR-032).